A 370-amino-acid polypeptide reads, in one-letter code: MTEPVRVQVQTANPYPVIIGRGLLGELVDELTGTRTVAIFHQPPLAETAEAVRAALAEKGIDAHRIEIPDAEDGKDLAVAGFCWEVLGRIGLTRSDAVVSLGGGAATDLAGFVAATWMRGVRVIHVPTTLLAMVDAAVGGKTGINTEAGKNLVGSFHEPSAVLIDLATLETVPRNEIVAGMAEVVKTGFIADPVILELIEKDPEAALDPTGTVLPELIRRSVEVKAKVVAADLRESDLREILNYGHTLGHAIERRERYRWRHGAAVAVGLVFAAELGRLAGRLDDATADRHRTILELVGLPTTYDADAFGQLVEGMQTDKKNRAGVLRFVVLDGLAKPGRLEGPDPSLLVAAYSAVAREGTPGTGGAVLL.

Residues 70 to 75 (DAEDGK), 104 to 108 (GAATD), 128 to 129 (TT), Lys141, Lys150, and 168 to 171 (TLET) contribute to the NAD(+) site. The Zn(2+) site is built by Glu183, His246, and His262.

The protein belongs to the sugar phosphate cyclases superfamily. Dehydroquinate synthase family. Requires Co(2+) as cofactor. The cofactor is Zn(2+). NAD(+) is required as a cofactor.

Its subcellular location is the cytoplasm. It carries out the reaction 7-phospho-2-dehydro-3-deoxy-D-arabino-heptonate = 3-dehydroquinate + phosphate. It participates in metabolic intermediate biosynthesis; chorismate biosynthesis; chorismate from D-erythrose 4-phosphate and phosphoenolpyruvate: step 2/7. Functionally, catalyzes the conversion of 3-deoxy-D-arabino-heptulosonate 7-phosphate (DAHP) to dehydroquinate (DHQ). This chain is 3-dehydroquinate synthase, found in Rhodococcus opacus (strain B4).